The chain runs to 541 residues: Chaperonin GroEL (541 aa).

ATP is bound by residues 29–32 (TLGP), 86–90 (DGTTT), glycine 413, 477–479 (DAL), and aspartate 493.

Belongs to the chaperonin (HSP60) family. As to quaternary structure, forms a cylinder of 14 subunits composed of two heptameric rings stacked back-to-back. Interacts with the co-chaperonin GroES.

Its subcellular location is the cytoplasm. It carries out the reaction ATP + H2O + a folded polypeptide = ADP + phosphate + an unfolded polypeptide.. Its function is as follows. Together with its co-chaperonin GroES, plays an essential role in assisting protein folding. The GroEL-GroES system forms a nano-cage that allows encapsulation of the non-native substrate proteins and provides a physical environment optimized to promote and accelerate protein folding. In Clostridium botulinum (strain 657 / Type Ba4), this protein is Chaperonin GroEL.